A 136-amino-acid polypeptide reads, in one-letter code: Small ribosomal subunit protein eS6 (136 aa).

This sequence belongs to the eukaryotic ribosomal protein eS6 family.

The polypeptide is Small ribosomal subunit protein eS6 (Methanosarcina mazei (strain ATCC BAA-159 / DSM 3647 / Goe1 / Go1 / JCM 11833 / OCM 88) (Methanosarcina frisia)).